Here is a 299-residue protein sequence, read N- to C-terminus: Palmitoyltransferase ZDHHC3 (299 aa).

Over 1–47 (MMLIPTHHFRDIERKPEYLQPEKCAPPPFPGPVGTMWFIRDGCGIAC) the chain is Cytoplasmic. Tyrosine 18 carries the phosphotyrosine modification. The helical transmembrane segment at 48-68 (AIVTWFLVLYAEFVVLFVMLI) threads the bilayer. Topologically, residues 69–72 (PSRD) are lumenal. A helical membrane pass occupies residues 73–93 (YAYSIINGIVFNLLAFLALAS). The Cytoplasmic portion of the chain corresponds to 94–171 (HCRAMLTDPG…NCVGENNQKY (78 aa)). Residues 128–254 (KCPKCCSIKP…DETGIEQLKK (127 aa)) form the DHHC domain. Residue cysteine 146 is the site of S-palmitoyl cysteine attachment. Residue cysteine 157 is the S-palmitoyl cysteine intermediate of the active site. A helical membrane pass occupies residues 172–192 (FVLFTMYIALISLHALIMVGF). Residues 193–214 (HFLHCFEEDWTKCSSFSPPTTV) are Lumenal-facing. The chain crosses the membrane as a helical span at residues 215–235 (ILLILLCFEALLFLIFTSVMF). The Cytoplasmic portion of the chain corresponds to 236 to 299 (GTQVHSICTD…GKADPYQYVV (64 aa)).

This sequence belongs to the DHHC palmitoyltransferase family. As to quaternary structure, monomer. Homooligomers. The monomeric form has a higher catalytic activity. Forms heterooligomers with ZDHHC7. Interacts with TNFRSF10A. Phosphorylation by FGFR1 and SRC probably regulates the palmitoyltransferase activity. Post-translationally, autopalmitoylated.

The protein resides in the golgi apparatus membrane. The catalysed reaction is L-cysteinyl-[protein] + hexadecanoyl-CoA = S-hexadecanoyl-L-cysteinyl-[protein] + CoA. The enzyme catalyses L-cysteinyl-[protein] + tetradecanoyl-CoA = S-tetradecanoyl-L-cysteinyl-[protein] + CoA. It catalyses the reaction L-cysteinyl-[protein] + octadecanoyl-CoA = S-octadecanoyl-L-cysteinyl-[protein] + CoA. Functionally, golgi-localized palmitoyltransferase that catalyzes the addition of palmitate onto various protein substrates. Has no stringent fatty acid selectivity and in addition to palmitate can also transfer onto target proteins myristate from tetradecanoyl-CoA and stearate from octadecanoyl-CoA. Plays an important role in G protein-coupled receptor signaling pathways involving GNAQ and potentially other heterotrimeric G proteins by regulating their dynamic association with the plasma membrane. Palmitoylates ITGA6 and ITGB4, thereby regulating the alpha-6/beta-4 integrin localization, expression and function in cell adhesion to laminin. Plays a role in the TRAIL-activated apoptotic signaling pathway most probably through the palmitoylation and localization to the plasma membrane of TNFRSF10A. In the brain, by palmitoylating the gamma subunit GABRG2 of GABA(A) receptors and regulating their postsynaptic accumulation, plays a role in synaptic GABAergic inhibitory function and GABAergic innervation. Palmitoylates the neuronal protein GAP43 which is also involved in the formation of GABAergic synapses. Palmitoylates NCDN thereby regulating its association with endosome membranes. Probably palmitoylates PRCD and is involved in its proper localization within the photoreceptor. Could mediate the palmitoylation of NCAM1 and regulate neurite outgrowth. Could palmitoylate DNAJC5 and regulate its localization to Golgi membranes. Also constitutively palmitoylates DLG4. May also palmitoylate SNAP25. Could palmitoylate the glutamate receptors GRIA1 and GRIA2 but this has not been confirmed in vivo. Could also palmitoylate the D(2) dopamine receptor DRD2. May also palmitoylate LAMTOR1, promoting its localization to lysosomal membranes. Palmitoylates the Toll-like receptor 9/TLR9 in the Golgi and thereby regulates TLR9 trafficking to endosomes. May palmitoylate CALHM1 and CALHM3 subunits of gustatory voltage-gated ion channels and modulate channel gating and kinetics. The chain is Palmitoyltransferase ZDHHC3 from Rattus norvegicus (Rat).